The chain runs to 83 residues: NAD(P)H-quinone oxidoreductase subunit L (83 aa).

2 helical membrane passes run 17-37 and 53-73; these read VLLA…LALL and TAIY…APFI.

It belongs to the complex I NdhL subunit family. As to quaternary structure, NDH-1 can be composed of about 15 different subunits; different subcomplexes with different compositions have been identified which probably have different functions.

Its subcellular location is the cellular thylakoid membrane. It catalyses the reaction a plastoquinone + NADH + (n+1) H(+)(in) = a plastoquinol + NAD(+) + n H(+)(out). The catalysed reaction is a plastoquinone + NADPH + (n+1) H(+)(in) = a plastoquinol + NADP(+) + n H(+)(out). Functionally, NDH-1 shuttles electrons from an unknown electron donor, via FMN and iron-sulfur (Fe-S) centers, to quinones in the respiratory and/or the photosynthetic chain. The immediate electron acceptor for the enzyme in this species is believed to be plastoquinone. Couples the redox reaction to proton translocation, and thus conserves the redox energy in a proton gradient. Cyanobacterial NDH-1 also plays a role in inorganic carbon-concentration. The chain is NAD(P)H-quinone oxidoreductase subunit L from Synechococcus sp. (strain RCC307).